Reading from the N-terminus, the 195-residue chain is uncharacterized protein (195 aa).

Disordered regions lie at residues 1-51 (MTHN…GPSY) and 160-195 (SYSQ…KSCN). Residues 13-28 (SYQNQAPQPQYYTRQP) are compositionally biased toward polar residues. Residues 170 to 189 (YYKKHKHHSHHRPKHVKSSR) are compositionally biased toward basic residues.

This is an uncharacterized protein from Acanthamoeba polyphaga mimivirus (APMV).